A 90-amino-acid chain; its full sequence is Co-chaperonin GroES (90 aa).

Belongs to the GroES chaperonin family. As to quaternary structure, heptamer of 7 subunits arranged in a ring. Interacts with the chaperonin GroEL.

It localises to the cytoplasm. Functionally, together with the chaperonin GroEL, plays an essential role in assisting protein folding. The GroEL-GroES system forms a nano-cage that allows encapsulation of the non-native substrate proteins and provides a physical environment optimized to promote and accelerate protein folding. GroES binds to the apical surface of the GroEL ring, thereby capping the opening of the GroEL channel. The chain is Co-chaperonin GroES from Borreliella burgdorferi (strain ATCC 35210 / DSM 4680 / CIP 102532 / B31) (Borrelia burgdorferi).